The chain runs to 168 residues: G/U mismatch-specific DNA glycosylase (168 aa).

Belongs to the uracil-DNA glycosylase (UDG) superfamily. TDG/mug family. As to quaternary structure, binds DNA as a monomer.

It is found in the cytoplasm. The enzyme catalyses Specifically hydrolyzes mismatched double-stranded DNA and polynucleotides, releasing free uracil.. Its function is as follows. Excises ethenocytosine and uracil, which can arise by alkylation or deamination of cytosine, respectively, from the corresponding mispairs with guanine in ds-DNA. It is capable of hydrolyzing the carbon-nitrogen bond between the sugar-phosphate backbone of the DNA and the mispaired base. The complementary strand guanine functions in substrate recognition. Required for DNA damage lesion repair in stationary-phase cells. The sequence is that of G/U mismatch-specific DNA glycosylase from Klebsiella pneumoniae subsp. pneumoniae (strain ATCC 700721 / MGH 78578).